The following is a 368-amino-acid chain: MDLSIPNPVADTTKAADAGTAGGQPLEIDALIVGAGPVGLFQVFELGLLEIKAHVIDSLKVVGGQCVELYPDKPIYDIPAVPSCTGQELTDNLLKQIEPFGPTFHLGQEVAVVERRDDGRFFVETSLGTRFITKTIFIAAGVGSFQPRTLKVDGIDKFDGKQLFYRVKDPSRFHGRNLVIVGGGDSALDWTLDLVGKAESVVMIHRRDGFRAAPASVAKMKELCEQMEMQFLVGQIGGYEEKDGVLTEIKVTGADGVTRRLPVDDVLVFFGLSPKLGPIAEWGLDLERKQIKVDTEKFQTNIPGIFAVGDINTYPGKKKLILSGFHEAALAAFGAAPYIFPEKKIHMQYTTTSPKLHKVLGVESPVFD.

Aspartate 57, glutamine 65, tyrosine 70, valine 110, phenylalanine 145, aspartate 310, and threonine 351 together coordinate FAD.

This sequence belongs to the ferredoxin--NADP reductase type 2 family. In terms of assembly, homodimer. FAD serves as cofactor.

The enzyme catalyses 2 reduced [2Fe-2S]-[ferredoxin] + NADP(+) + H(+) = 2 oxidized [2Fe-2S]-[ferredoxin] + NADPH. This Cupriavidus pinatubonensis (strain JMP 134 / LMG 1197) (Cupriavidus necator (strain JMP 134)) protein is Ferredoxin--NADP reductase 2.